Here is an 82-residue protein sequence, read N- to C-terminus: MKLLLLALIQFYRRWISPLTPASCRFYPTCSQYGLEAIDRFGPLKGSWLTLCRILRCHPFHPGGYDPVPPLPSCSCGKSPCD.

It belongs to the UPF0161 family.

The protein localises to the cell inner membrane. Its function is as follows. Could be involved in insertion of integral membrane proteins into the membrane. The polypeptide is Putative membrane protein insertion efficiency factor (Synechococcus elongatus (strain ATCC 33912 / PCC 7942 / FACHB-805) (Anacystis nidulans R2)).